We begin with the raw amino-acid sequence, 293 residues long: Formamidopyrimidine-DNA glycosylase (293 aa).

P2 serves as the catalytic Schiff-base intermediate with DNA. Catalysis depends on E3, which acts as the Proton donor. The active-site Proton donor; for beta-elimination activity is the K60. The DNA site is built by H110, R129, and R174. The FPG-type zinc-finger motif lies at 259-293 (NVYRRTGKECRKCGNLIERKKISGRSTHWCPKCQK). The active-site Proton donor; for delta-elimination activity is the R283.

The protein belongs to the FPG family. As to quaternary structure, monomer. Zn(2+) is required as a cofactor.

It catalyses the reaction Hydrolysis of DNA containing ring-opened 7-methylguanine residues, releasing 2,6-diamino-4-hydroxy-5-(N-methyl)formamidopyrimidine.. The enzyme catalyses 2'-deoxyribonucleotide-(2'-deoxyribose 5'-phosphate)-2'-deoxyribonucleotide-DNA = a 3'-end 2'-deoxyribonucleotide-(2,3-dehydro-2,3-deoxyribose 5'-phosphate)-DNA + a 5'-end 5'-phospho-2'-deoxyribonucleoside-DNA + H(+). Involved in base excision repair of DNA damaged by oxidation or by mutagenic agents. Acts as a DNA glycosylase that recognizes and removes damaged bases. Has a preference for oxidized purines, such as 7,8-dihydro-8-oxoguanine (8-oxoG). Has AP (apurinic/apyrimidinic) lyase activity and introduces nicks in the DNA strand. Cleaves the DNA backbone by beta-delta elimination to generate a single-strand break at the site of the removed base with both 3'- and 5'-phosphates. The protein is Formamidopyrimidine-DNA glycosylase of Prochlorococcus marinus (strain MIT 9215).